The sequence spans 471 residues: MKKTLYDKIYDSHIVYEEKNNTSLLYIDLHLLHEVTSPQAFDSLRDKNRKVRQPKKTFATMDHNVSTTSQDINASGSMAKVQMQELIKNCSEFNISLYDIKNPNQGIVHVISPEKGMTLPGMTIVCGDSHTSTHGAFGALSFGIGTSEVEHVLATQTLKQQRFKNMKIEITGEIQKFVTAKDLILFIIGKLGSSGGAGYIIEFCGNVIEKMSMEERMTICNMAIEIGAKSGLIAPDEVTFSYLKNKMYAPRGVFWKKALNFWKNLKSDKNAFFDKVVNINISDLSPQITWGTNPDQVISIDQKIPDFSSFDNLIKKDLAKSACKYMGLKIGTYLTNITVDKVFIGSCTNGRIEDLRAASKILKDKKIANNVKAIVVPGSGSVKREAENEGLDKIFISAGFEWRLPGCSMCLGMNKDRLNDGERCASTSNRNFEGRQGRGGRTHLVSPIMAAAAAVYGKFVDVRKLYNGENN.

3 residues coordinate [4Fe-4S] cluster: C347, C407, and C410.

This sequence belongs to the aconitase/IPM isomerase family. LeuC type 1 subfamily. Heterodimer of LeuC and LeuD. [4Fe-4S] cluster is required as a cofactor.

It carries out the reaction (2R,3S)-3-isopropylmalate = (2S)-2-isopropylmalate. The protein operates within amino-acid biosynthesis; L-leucine biosynthesis; L-leucine from 3-methyl-2-oxobutanoate: step 2/4. Functionally, catalyzes the isomerization between 2-isopropylmalate and 3-isopropylmalate, via the formation of 2-isopropylmaleate. This Buchnera aphidicola subsp. Acyrthosiphon pisum (strain APS) (Acyrthosiphon pisum symbiotic bacterium) protein is 3-isopropylmalate dehydratase large subunit.